Here is a 487-residue protein sequence, read N- to C-terminus: DEAD-box ATP-dependent RNA helicase CshA (487 aa).

A Q motif motif is present at residues 3 to 31 (ITFQDFQLSSDLTKAIKRMGFEEATPIQA). In terms of domain architecture, Helicase ATP-binding spans 34–204 (IPLGLANKDV…ERFMTNPEHV (171 aa)). ATP is bound at residue 47–54 (AQTGTGKT). Positions 152–155 (DEAD) match the DEAD box motif. Residues 215–375 (NIQQFYLEVH…RMKAPTLDEA (161 aa)) form the Helicase C-terminal domain. Positions 428 to 440 (DNTPVRLTEEAPL) are enriched in basic and acidic residues. The disordered stretch occupies residues 428–487 (DNTPVRLTEEAPLRTKRNKNHHHRSSKRRDGGGYRGKNNRSSYDKKRSSNDRRQKKSYNS). Positions 441-454 (RTKRNKNHHHRSSK) are enriched in basic residues. Residues 469 to 479 (SYDKKRSSNDR) show a composition bias toward basic and acidic residues.

The protein belongs to the DEAD box helicase family. CshA subfamily. In terms of assembly, oligomerizes, may be a member of the RNA degradosome.

The protein resides in the cytoplasm. The catalysed reaction is ATP + H2O = ADP + phosphate + H(+). Functionally, DEAD-box RNA helicase possibly involved in RNA degradation. Unwinds dsRNA in both 5'- and 3'-directions, has RNA-dependent ATPase activity. The chain is DEAD-box ATP-dependent RNA helicase CshA from Bacillus licheniformis (strain ATCC 14580 / DSM 13 / JCM 2505 / CCUG 7422 / NBRC 12200 / NCIMB 9375 / NCTC 10341 / NRRL NRS-1264 / Gibson 46).